The following is a 291-amino-acid chain: Ribosomal RNA small subunit methyltransferase A (291 aa).

Positions 33, 35, 60, 81, 111, and 129 each coordinate S-adenosyl-L-methionine.

Belongs to the class I-like SAM-binding methyltransferase superfamily. rRNA adenine N(6)-methyltransferase family. RsmA subfamily.

Its subcellular location is the cytoplasm. It carries out the reaction adenosine(1518)/adenosine(1519) in 16S rRNA + 4 S-adenosyl-L-methionine = N(6)-dimethyladenosine(1518)/N(6)-dimethyladenosine(1519) in 16S rRNA + 4 S-adenosyl-L-homocysteine + 4 H(+). Specifically dimethylates two adjacent adenosines (A1518 and A1519) in the loop of a conserved hairpin near the 3'-end of 16S rRNA in the 30S particle. May play a critical role in biogenesis of 30S subunits. This is Ribosomal RNA small subunit methyltransferase A from Streptomyces griseus subsp. griseus (strain JCM 4626 / CBS 651.72 / NBRC 13350 / KCC S-0626 / ISP 5235).